The following is a 232-amino-acid chain: Aprataxin-like protein (232 aa).

The 123-residue stretch at 38–160 folds into the HIT domain; it reads LKVYIESPES…MTLDHVSPSL (123 aa). Interaction with DNA stretches follow at residues 63–67, 138–149, and 161–165; these read DMFPK, HAGPSMNNLHLH, and KNSAH. His-147 functions as the Nucleophile in the catalytic mechanism. Residues Cys-200 and Cys-203 each coordinate Zn(2+). The interaction with DNA stretch occupies residues 209–212; that stretch reads RHFT. Zn(2+) contacts are provided by His-217 and Glu-221.

Monomer.

It is found in the nucleus. It localises to the cytoplasm. The enzyme catalyses a 5'-end adenosine-5'-diphospho-5'-2'-deoxyribonucleoside-DNA + H2O = a 5'-end 5'-phospho-2'-deoxyribonucleoside-DNA + AMP + 2 H(+). The catalysed reaction is a 5'-end adenosine-5'-diphospho-5'-ribonucleoside-2'-deoxyribonucleotide-DNA + H2O = a 5'-end 5'-phospho-ribonucleoside-2'-deoxyribonucleotide-DNA + AMP + 2 H(+). It carries out the reaction a 3'-end 2'-deoxyribonucleotide-3'-diphospho-5'-guanosine-DNA + H2O = a 3'-end 2'-deoxyribonucleotide 3'-phosphate-DNA + GMP + 2 H(+). Functionally, DNA-binding protein involved in single-strand DNA break repair, double-strand DNA break repair and base excision repair. Resolves abortive DNA ligation intermediates formed either at base excision sites, or when DNA ligases attempt to repair non-ligatable breaks induced by reactive oxygen species. Catalyzes the release of adenylate groups covalently linked to 5'-phosphate termini, resulting in the production of 5'-phosphate termini that can be efficiently rejoined. Likewise, catalyzes the release of 3'-linked guanosine (DNAppG) and inosine (DNAppI) from DNA, but has higher specific activity with 5'-linked adenosine (AppDNA). The protein is Aprataxin-like protein (hnt3) of Schizosaccharomyces pombe (strain 972 / ATCC 24843) (Fission yeast).